Here is a 635-residue protein sequence, read N- to C-terminus: Peptidyl-prolyl cis-trans isomerase PASTICCINO1 (635 aa).

The segment covering 1–10 (MAVGDQTEQN) has biased composition (polar residues). The segment at 1 to 28 (MAVGDQTEQNYLPKKKKSETEDDKRRKK) is disordered. 3 consecutive PPIase FKBP-type domains span residues 51–147 (GDQV…LDFS), 175–260 (PYEV…VHFI), and 291–383 (DSRL…LGFE). 3 TPR repeats span residues 400-433 (ADKIRSTGNRLFKEGKFELAKAKYEKVLREFNHV), 449-482 (NMLHLNVAACLLKMGEWRKSIETCNKVLEAKPGH), and 483-516 (VKGLYRRGMAYIAGGEYDDARNDFNMMIKVDKSS). Residues 530–546 (KEQEAESKARKQFKGLF) are calmodulin-binding. Acidic residues predominate over residues 569–586 (EVDETKDNDDDETLEEEG). Residues 569 to 593 (EVDETKDNDDDETLEEEGATTVSTE) are disordered. A helical; Anchor for type IV membrane protein membrane pass occupies residues 609–629 (VMLQIGIQLGVVLIGILIFQF).

It belongs to the FKBP-type PPIase family. As to quaternary structure, interacts with calmodulin (CaM). Interacts with RPM1 and NAC089. Interacts with the elongase complex core members KCR1, PAS2 and CER10. As to expression, expressed ubiquitously.

It localises to the endoplasmic reticulum membrane. The protein localises to the cytoplasm. It is found in the nucleus. It carries out the reaction [protein]-peptidylproline (omega=180) = [protein]-peptidylproline (omega=0). PPIases accelerate the folding of proteins. It catalyzes the cis-trans isomerization of proline imidic peptide bonds in oligopeptides. Essential protein regulating cell division, adhesion and elongation throughout the plant development and embryogenesis. Required for the spatial organization of apical meristems. Involved in the hormonal control of cell division and differentiation mediated by cytokinins and auxin. Regulates the function of NAC089 transcription factor by controlling its targeting to the nucleus upon plant cell division. Interacts with enzymes of the fatty acid elongase complex and favors the generation of very-long-chain fatty acids (VLCFAs) required for polar auxin transport and tissue patterning during plant development. In Arabidopsis thaliana (Mouse-ear cress), this protein is Peptidyl-prolyl cis-trans isomerase PASTICCINO1 (PAS1).